A 956-amino-acid chain; its full sequence is Plasma membrane ATPase 1 (956 aa).

Topologically, residues Met-1–Phe-65 are cytoplasmic. A helical transmembrane segment spans residues Leu-66 to Ile-85. Over Ala-86 to Trp-97 the chain is Extracellular. Residues Gln-98–Glu-118 form a helical membrane-spanning segment. Residues Asn-119–Ile-247 are Cytoplasmic-facing. A helical membrane pass occupies residues Gly-248–Pro-268. Residues Ile-269 to Gly-277 are Extracellular-facing. Residues Ile-278 to Thr-295 form a helical membrane-spanning segment. The Cytoplasmic portion of the chain corresponds to Val-296–Met-646. Asp-333 acts as the 4-aspartylphosphate intermediate in catalysis. Asp-592 and Asp-596 together coordinate Mg(2+). A helical transmembrane segment spans residues Lys-647–Leu-666. At Leu-667–Asp-674 the chain is on the extracellular side. Residues Phe-675–Asp-697 traverse the membrane as a helical segment. Residues Arg-698 to Ile-713 lie on the Cytoplasmic side of the membrane. A helical membrane pass occupies residues Phe-714–Ala-734. Residues Ala-735 to Arg-759 lie on the Extracellular side of the membrane. Residues Lys-760–Thr-780 traverse the membrane as a helical segment. Residues Arg-781–Gly-792 lie on the Cytoplasmic side of the membrane. Residues Leu-793 to Ala-813 form a helical membrane-spanning segment. Residues Asn-814–Glu-821 are Extracellular-facing. A helical transmembrane segment spans residues Gly-822–Leu-842. The Cytoplasmic portion of the chain corresponds to Asp-843–Val-956.

Belongs to the cation transport ATPase (P-type) (TC 3.A.3) family. Type IIIA subfamily. In terms of assembly, possibly exists as a homodimer or a homotrimer.

The protein localises to the cell membrane. The enzyme catalyses ATP + H2O + H(+)(in) = ADP + phosphate + 2 H(+)(out). Its function is as follows. The plasma membrane ATPase of plants and fungi is a hydrogen ion pump. The proton gradient it generates drives the active transport of nutrients by H(+)-symport. The resulting external acidification and/or internal alkinization may mediate growth responses. The polypeptide is Plasma membrane ATPase 1 (LHA1) (Solanum lycopersicum (Tomato)).